Consider the following 204-residue polypeptide: Heart- and neural crest derivatives-expressed protein 1 (204 aa).

Disordered regions lie at residues 1–24, 57–115, and 172–204; these read MNLV…HPAH, APDF…RTES, and LKKA…EKRD. Composition is skewed to basic residues over residues 8-22 and 98-110; these read AHHH…HPHP and LGRR…KKER. Residues 100–152 enclose the bHLH domain; sequence RRKGSGPKKERRRTESINSAFAELRECIPNVPADTKLSKIKTLRLATSYIAYL. Threonine 113 carries the post-translational modification Phosphothreonine; by PLK4. At serine 115 the chain carries Phosphoserine; by PLK4.

Efficient DNA binding requires dimerization with another bHLH protein. Forms homodimers and heterodimers with TCF3 gene products E12 and E47, HAND2 and HEY1, HEY2 and HEYL (hairy-related transcription factors). Interacts with MDFIC. Interacts with SOX15; the interaction enhances HAND1-induced differentiation of trophoblast giant cells. Post-translationally, phosphorylation by PLK4 disrupts the interaction with MDFIC and leads to translocation into the nucleoplasm, allowing dimerization and transcription factor activity.

Its subcellular location is the nucleus. It localises to the nucleoplasm. The protein localises to the nucleolus. Functionally, transcription factor that plays an essential role in both trophoblast giant cell differentiation and in cardiac morphogenesis. Binds the DNA sequence 5'-NRTCTG-3' (non-canonical E-box). Acts as a transcriptional repressor of SOX15. In the adult, could be required for ongoing expression of cardiac-specific genes. The sequence is that of Heart- and neural crest derivatives-expressed protein 1 (HAND1) from Ovis aries (Sheep).